A 479-amino-acid polypeptide reads, in one-letter code: Beta-amyrin 28-monooxygenase (479 aa).

A helical membrane pass occupies residues 5–25 (FYLSLLLLFVTFISLSLFFIF). Cys426 provides a ligand contact to heme.

The protein belongs to the cytochrome P450 family. The cofactor is heme. Expressed in roots, nodules and flowers.

The protein localises to the membrane. The catalysed reaction is beta-amyrin + 3 reduced [NADPH--hemoprotein reductase] + 3 O2 = oleanolate + 3 oxidized [NADPH--hemoprotein reductase] + 4 H2O + 4 H(+). Functionally, catalyzes the carboxylation of beta-amyrin at the C-28 position to form oleanolic acid. Involved in an early step in the hemolytic saponin biosynthetic pathway. Catalyzes the carboxylation of alpha-amyrin and lupeol at the C-28 position to form ursolic acid and betulinic acid respectively. This Medicago truncatula (Barrel medic) protein is Beta-amyrin 28-monooxygenase.